A 24-amino-acid polypeptide reads, in one-letter code: Ascaphin-2 (24 aa).

Expressed by the skin glands.

It is found in the secreted. Its function is as follows. Antimicrobial peptide that shows higher potency against Gram-negative bacteria than against Gram-positive bacteria. Has a very week hemolytic activity. In Ascaphus truei (Coastal tailed frog), this protein is Ascaphin-2.